The primary structure comprises 882 residues: Exo-beta-D-glucosaminidase ARB_07888 (882 aa).

An N-terminal signal peptide occupies residues Met-1–Ala-21. Residues Leu-22–Thr-31 constitute a propeptide that is removed on maturation. Residues Asn-86, Asn-200, Asn-234, Asn-237, Asn-287, and Asn-442 are each glycosylated (N-linked (GlcNAc...) asparagine). Asp-466 functions as the Proton donor in the catalytic mechanism. Residue Glu-538 is the Nucleophile of the active site. Asn-688, Asn-773, and Asn-816 each carry an N-linked (GlcNAc...) asparagine glycan.

Belongs to the glycosyl hydrolase 2 family. In terms of assembly, monomer.

The protein resides in the secreted. It catalyses the reaction Hydrolysis of chitosan or chitosan oligosaccharides to remove successive D-glucosamine residues from the non-reducing termini.. In terms of biological role, hydrolyzes chitosan and chitooligosaccharides with retention of anomeric configuration. This chain is Exo-beta-D-glucosaminidase ARB_07888, found in Arthroderma benhamiae (strain ATCC MYA-4681 / CBS 112371) (Trichophyton mentagrophytes).